The primary structure comprises 985 residues: Protein psiQ (985 aa).

Residues 1-20 (MMKYIYILLIFSLLFLKINS) form the signal peptide. In terms of domain architecture, PA14 spans 102 to 247 (QSTTNPNVYA…YDECGVCQGD (146 aa)). Residues N127, N309, N424, N491, N517, N527, N592, N620, N649, N696, N735, N767, N786, N824, and N842 are each glycosylated (N-linked (GlcNAc...) asparagine).

It belongs to the prespore-cell-inducing factor family.

It is found in the secreted. This chain is Protein psiQ (psiQ), found in Dictyostelium discoideum (Social amoeba).